We begin with the raw amino-acid sequence, 554 residues long: MSDSKPPKDSSSPSAAVPDVAAAAASSTPTPAPVAITPPSNPQSAHSFAQAQQRLIARRQTRDAQEAARVAAQQSESQLRARIAASQSPLLRRLGASTLSLWDTISSREGTRPAFRVGQVDAELLDEELVELMKGQVGEAVRYYGGGGGGDNNIKHEWDAEISLALRAVIFKLTIWDHDATYGAALQNLKYTDARHTGSVLVPPSKWQKGLYGLMTVGGRYMWSKWENWLREQDGGYDEPSPTVQRLSSMTDRLSTLHAAASFASFLVFLLQGRYRTLLDRVLRMRLAPPTSQVSREVSFEYLNRQLVWHAFTEFLLFVLPLVGINRWRRWLARTWRKTKKIMSTTGGEGAEEKKGEFAFLPERTCAICYQDQNQATNENELMAAATSKTGVVGSAQTDVTNPYETIPCGCVYCFVCLATRIEREEGEGWNCLRCGELVKECKPWSGDVLEHESKSPAQKTVVFADDVKDASDDEQENSQVLVQQEDDDEYPEEEGEEGGEEEEEEEEGSRSLEDLRTESASEESSEQEADSEGDESEDYEAEEEELGADLDED.

The segment at 1–63 is disordered; that stretch reads MSDSKPPKDS…RLIARRQTRD (63 aa). The Peroxisomal matrix portion of the chain corresponds to 1–115; the sequence is MSDSKPPKDS…SSREGTRPAF (115 aa). The span at 9 to 38 shows a compositional bias: low complexity; sequence DSSSPSAAVPDVAAAAASSTPTPAPVAITP. Residues 116-142 form a helical membrane-spanning segment; the sequence is RVGQVDAELLDEELVELMKGQVGEAVR. Over 143 to 154 the chain is Cytoplasmic; it reads YYGGGGGGDNNI. A helical transmembrane segment spans residues 155-180; that stretch reads KHEWDAEISLALRAVIFKLTIWDHDA. Topologically, residues 181–204 are peroxisomal matrix; it reads TYGAALQNLKYTDARHTGSVLVPP. The helical transmembrane segment at 205 to 231 threads the bilayer; the sequence is SKWQKGLYGLMTVGGRYMWSKWENWLR. The Cytoplasmic segment spans residues 232-241; that stretch reads EQDGGYDEPS. Residues 242 to 272 form a helical membrane-spanning segment; it reads PTVQRLSSMTDRLSTLHAAASFASFLVFLLQ. Over 273–299 the chain is Peroxisomal matrix; it reads GRYRTLLDRVLRMRLAPPTSQVSREVS. The chain crosses the membrane as a helical span at residues 300 to 323; that stretch reads FEYLNRQLVWHAFTEFLLFVLPLV. At 324 to 554 the chain is on the cytoplasmic side; the sequence is GINRWRRWLA…EELGADLDED (231 aa). Cysteine 366, cysteine 369, cysteine 409, cysteine 411, cysteine 414, cysteine 417, cysteine 432, and cysteine 435 together coordinate Zn(2+). The RING-type; atypical zinc-finger motif lies at 366-435; it reads CAICYQDQNQ…EGEGWNCLRC (70 aa). Residues 470–554 form a disordered region; the sequence is DASDDEQENS…EELGADLDED (85 aa). Residues 485–508 show a composition bias toward acidic residues; that stretch reads QEDDDEYPEEEGEEGGEEEEEEEE. Positions 509-520 are enriched in basic and acidic residues; it reads GSRSLEDLRTES. Acidic residues predominate over residues 521 to 554; it reads ASEESSEQEADSEGDESEDYEAEEEELGADLDED.

This sequence belongs to the pex2/pex10/pex12 family. In terms of assembly, component of the PEX2-PEX10-PEX12 retrotranslocation channel, composed of PEX2, PEX10 and PEX12.

It is found in the peroxisome membrane. The catalysed reaction is [E2 ubiquitin-conjugating enzyme]-S-ubiquitinyl-L-cysteine + [acceptor protein]-L-cysteine = [E2 ubiquitin-conjugating enzyme]-L-cysteine + [acceptor protein]-S-ubiquitinyl-L-cysteine.. It participates in protein modification; protein ubiquitination. In terms of biological role, E3 ubiquitin-protein ligase component of a retrotranslocation channel required for peroxisome organization by mediating export of the PEX5 receptor from peroxisomes to the cytosol, thereby promoting PEX5 recycling. The retrotranslocation channel is composed of PEX2, PEX10 and PEX12; each subunit contributing transmembrane segments that coassemble into an open channel that specifically allows the passage of PEX5 through the peroxisomal membrane. PEX2 also regulates peroxisome organization by acting as a E3 ubiquitin-protein ligase. PEX2 ubiquitinates PEX5 during its passage through the retrotranslocation channel: catalyzes monoubiquitination of PEX5 at 'Cys-6', a modification that acts as a signal for PEX5 extraction into the cytosol. Involved in caryogamy (nuclear fusion), a process required for sexual sporulation. In Podospora anserina (Pleurage anserina), this protein is Peroxisomal biogenesis factor 2 (PEX2).